Consider the following 317-residue polypeptide: Olfactory receptor 5K16 (317 aa).

At 1–28 (MEKTNHSLTTQFILVGFSDHPDLKTPLF) the chain is on the extracellular side. A glycan (N-linked (GlcNAc...) asparagine) is linked at N5. The chain crosses the membrane as a helical span at residues 29-49 (LLFSVIYLVTMVGNLGLVAVI). Residues 50-56 (YLEPRLH) are Cytoplasmic-facing. The chain crosses the membrane as a helical span at residues 57–77 (TPMYIFLGNLALMDSCCSCAI). Over 78 to 93 (TPKILENFFSVDRRIS) the chain is Extracellular. The chain crosses the membrane as a helical span at residues 94-114 (LYECMAQFYFLCLAETADCFL). Residues C97 and C189 are joined by a disulfide bond. The Cytoplasmic segment spans residues 115 to 144 (LAAMAYDRYVAICNPLQYHSMMSKKLSIQM). A helical transmembrane segment spans residues 145–165 (SIGTFITSNLHSLIHVGCLLR). Over 166 to 198 (LTFCKSNRIDHFFCDILPLYRLSCTDPFINELM) the chain is Extracellular. Residues 199–219 (IYIFSMPIQVFTITTVLVSYF) form a helical membrane-spanning segment. At 220-239 (CILLTIFKMKSKDGRGKAFS) the chain is on the cytoplasmic side. A helical transmembrane segment spans residues 240 to 259 (TCASHFFSVSIFYVCLLMYI). Topologically, residues 260–268 (RPFDEGNKD) are extracellular. The chain crosses the membrane as a helical span at residues 269-289 (IPVAVFYTIIIPLLNPFIYSL). Residues 290–317 (RNKEVVNAVKKVMKTHSIFKNASASMAR) lie on the Cytoplasmic side of the membrane.

This sequence belongs to the G-protein coupled receptor 1 family.

It is found in the cell membrane. Potential odorant receptor. In Mus musculus (Mouse), this protein is Olfactory receptor 5K16.